The primary structure comprises 3082 residues: Autotransporter adhesin BadA (3082 aa).

The first 47 residues, 1-47 (MKKLSVTSKRQYNLYASPISRRLSLLMKLSLETVTVMFLLGASPVLA), serve as a signal peptide directing secretion. Residues 48-376 (SNLALTGAKN…DAVNVAQLKA (329 aa)) form a binds to host cells region. Residues 48–2901 (SNLALTGAKN…KVQDIATVAD (2854 aa)) form a surface exposed passenger domain region. The segment at 53–2850 (TGAKNLSQNS…DARHNGVDSK (2798 aa)) is does not bind host cells, no host proangiogenic cytokine induction, collagen or fibronectin, no autoagglutination. The segment at 470–2850 (ITGVAEGTDA…DARHNGVDSK (2381 aa)) is required to bind fibronectin, not required for surface expression on bacteria, bacterial autoagglutination, host cell binding, collagen binding or host proangiogenic cytokine induction. Residues 2902–3027 (SAVKYEKDST…VSNLRYYDIP (126 aa)) are outer membrane translocation of the passenger domain. Transmembrane regions (beta stranded) follow at residues 3028–3039 (GSLSLSFGTGIW), 3044–3051 (AFAIGAGY), 3055–3065 (DGNIRSNLSIT), and 3070–3082 (QWGVGAGITLRLK). The tract at residues 3028–3082 (GSLSLSFGTGIWRSQSAFAIGAGYTSEDGNIRSNLSITSSGGQWGVGAGITLRLK) is translocator domain.

This sequence belongs to the autotransporter-2 (AT-2) (TC 1.B.40) family. Homotrimer. Crystals of the head region form trimers.

The protein resides in the cell surface. Its subcellular location is the cell outer membrane. Functionally, mediates bacterial adherence to host endothelial cells and host extracellular matrix proteins (collagen type I, III, IV, laminin and fibronectin). Static versus dynamic adherence results differ slightly; in dynamic adherence studies bacteria bind to fixed components under a constant defined flow rate to simulate in vivo infection conditions. Induces secretion of host proangiogenic cytokines such as VEGFA, ADM, IGFBP-3 and IL-8. May prevent bacterial phagocytosis by macrophages. Probably mediates bacterial autoagglutination. Negatively impacts type IV secretion system effectors (VirB/D4 T4SS and its substrate Bep proteins), possibly by preventing close association of host and bacterial cells. This implies the 2 factors are expressed at different times during infection. The chain is Autotransporter adhesin BadA from Bartonella henselae (Rochalimaea henselae).